The chain runs to 425 residues: Orexin/Hypocretin receptor type 1 (425 aa).

A disordered region spans residues 1–24; the sequence is MEPSATPGAQMGVPPGSREPSPVP. At 1–46 the chain is on the extracellular side; it reads MEPSATPGAQMGVPPGSREPSPVPPDYEDEFLRYLWRDYLYPKQYE. Positions 26 to 41 are required for response to orexin-A; it reads DYEDEFLRYLWRDYLY. A helical transmembrane segment spans residues 47–67; sequence WVLIAAYVAVFVVALVGNTLV. Over 68–82 the chain is Cytoplasmic; it reads CLAVWRNHHMRTVTN. A helical membrane pass occupies residues 83-105; that stretch reads YFIVNLSLADVLVTAICLPASLL. At 106–119 the chain is on the extracellular side; that stretch reads VDITESWLFGHALC. A disulfide bridge links cysteine 119 with cysteine 202. The helical transmembrane segment at 120-140 threads the bilayer; sequence KVIPYLQAVSVSVAVLTLSFI. Over 141 to 160 the chain is Cytoplasmic; it reads ALDRWYAICHPLLFKSTARR. A helical membrane pass occupies residues 161 to 182; sequence ARGSILGIWAVSLAIMVPQAAV. Residues 183–213 are Extracellular-facing; it reads MECSSVLPELANRTRLFSVCDERWADDLYPK. An N-linked (GlcNAc...) asparagine glycan is attached at asparagine 194. A helical membrane pass occupies residues 214 to 235; the sequence is IYHSCFFIVTYLAPLGLMAMAY. The Cytoplasmic portion of the chain corresponds to 236–298; the sequence is FQIFRKLWGR…QMRARRKTAK (63 aa). The helical transmembrane segment at 299-321 threads the bilayer; that stretch reads MLMVVLLVFALCYLPISVLNVLK. Residue asparagine 318 participates in suvorexant binding. At 322 to 336 the chain is on the extracellular side; sequence RVFGMFRQASDREAV. A helical membrane pass occupies residues 337 to 360; the sequence is YACFTFSHWLVYANSAANPIIYNF. The Cytoplasmic segment spans residues 361–425; sequence LSGKFREQFK…VLTSVTTVLP (65 aa).

It belongs to the G-protein coupled receptor 1 family.

The protein localises to the cell membrane. In terms of biological role, moderately selective excitatory receptor for orexin-A and, with a lower affinity, for orexin-B neuropeptide. Triggers an increase in cytoplasmic Ca(2+) levels in response to orexin-A binding. The sequence is that of Orexin/Hypocretin receptor type 1 from Homo sapiens (Human).